The sequence spans 804 residues: Phenylalanine--tRNA ligase beta subunit (804 aa).

The tRNA-binding domain occupies Asp40–Ile155. The B5 domain occupies Gln409–Ala484. Mg(2+) is bound by residues Asp462, Asp468, Glu471, and Glu472. The 94-residue stretch at Pro710–Arg803 folds into the FDX-ACB domain.

Belongs to the phenylalanyl-tRNA synthetase beta subunit family. Type 1 subfamily. As to quaternary structure, tetramer of two alpha and two beta subunits. It depends on Mg(2+) as a cofactor.

Its subcellular location is the cytoplasm. The catalysed reaction is tRNA(Phe) + L-phenylalanine + ATP = L-phenylalanyl-tRNA(Phe) + AMP + diphosphate + H(+). This chain is Phenylalanine--tRNA ligase beta subunit, found in Geobacillus kaustophilus (strain HTA426).